A 36-amino-acid chain; its full sequence is Photosystem I reaction center subunit VIII (36 aa).

A helical membrane pass occupies residues 9–29; that stretch reads ILVPLVGLVFPAVTMASLFLY.

It belongs to the PsaI family.

The protein localises to the plastid. Its subcellular location is the chloroplast thylakoid membrane. In terms of biological role, may help in the organization of the PsaL subunit. The protein is Photosystem I reaction center subunit VIII of Staurastrum punctulatum (Green alga).